A 749-amino-acid polypeptide reads, in one-letter code: MLLLLCNRSVVPRGIRRILRTAATVTSLRWNHTGPSASETLLEKNIRNIGILAHIDGGKTTTTERMLFYAGKTNVLGEVHHGNTVTDFLVQERERGITICSAAVSFDWRDHRVNLLDTPGHIDFTMEVEQSLAAVDGTVVILDGSAGVEAQTVTVWSQADRHRLPRLVFVNKMDKESADFEGCLEELEKKLGVVAVPLQMPVIKEGKLTGVVDVLSGAQVVWDKQNHGRTYKAIPLVDQQLVEAQDKLYQIIDVLSGMDDGLAQVIIESDSMDNVKPELVASAIRACTMKQQIVPVFLGSAYKNIGVQLLMDAVLKYLPAPNERNEIYNCFGSDFVGKISKVTHDKQRGPLSLVRVFRGTLKKGAKIITAKGTSETIQRIYAPWADEYREISSISAGNVGLCAGPKSTVTGDLVVANASVLRNALKKLSPTNDGVEEDDINELLASKLSFHTVVPDAVYFCSIEPPSSSYQAALDAALREIQREDPSLRVSYDETTMQTVLGGMGKLHLEIIKSRILSEYKIDVDLGPLQIAYKETLEEPARGSWTAEKEIAGSKQLVRMEVTVHAKRKDERFLLDSSPEAQENLRMIRPRQMSYVRKGSLAALERGPKLGGQLMDVAVTLHQLTIGKGTADTFIMAATAQCVRHVLSSAKCRLMEPIMLLEMVMPAEHLNPILADLGKRRCEILDVTARGQQHKVLRANAPLAELEDYSSEVRCISSGTASVSMEPNGYALLSEMDEASAIRRAHGLE.

A mitochondrion-targeting transit peptide spans 1-22 (MLLLLCNRSVVPRGIRRILRTA). Residues 44–322 (KNIRNIGILA…AVLKYLPAPN (279 aa)) enclose the tr-type G domain. Residues 53–60 (AHIDGGKT), 117–121 (DTPGH), and 171–174 (NKMD) each bind GTP.

It belongs to the TRAFAC class translation factor GTPase superfamily. Classic translation factor GTPase family. EF-G/EF-2 subfamily.

The protein resides in the mitochondrion. Mitochondrial GTPase that mediates the disassembly of ribosomes from messenger RNA at the termination of mitochondrial protein biosynthesis. Not involved in the GTP-dependent ribosomal translocation step during translation elongation. The chain is Ribosome-releasing factor 2, mitochondrial from Culex quinquefasciatus (Southern house mosquito).